A 126-amino-acid polypeptide reads, in one-letter code: Copper resistance protein C (126 aa).

An N-terminal signal peptide occupies residues 1 to 24; it reads MLLNRTSFVTLFAAGMLVSALAQA. His25 contacts Cu(2+). Met64, Met67, Met70, His72, and Met75 together coordinate Cu(+). His115 provides a ligand contact to Cu(2+).

It belongs to the CopC family. As to quaternary structure, monomer.

The protein localises to the periplasm. With respect to regulation, the redox state of copper bound to CopC may act as a switch between the possible trafficking pathways of the metal ion. Functionally, copper-binding protein involved in copper resistance and homeostasis. Probably mediates copper resistance by sequestering the excess of copper in the periplasm. May act as a copper carrier in the oxidizing periplasmic space that exchanges either Cu(I) or Cu(II) with its putative partners CopA, CopB and CopD. The polypeptide is Copper resistance protein C (Pseudomonas syringae pv. tomato).